Consider the following 287-residue polypeptide: MAGGREIKTKIKSVQNTRKVTRALEMVSASKIRKAQERMKTSRPYAQAMKQVIGHLAQASTDYQHPFLVEREQVKRVGYIVISSDRGLAGGLNNNLFRKMLGEVRPWQDKGAEIDVVTIGQKASAFFRRIKVNMVGSVTHLGDSPHIEQLVGVIKVMLDAFTEGKVDRVYLVYNRFVNTMTQKASFEQLLPLPAAEHKVAHHDWDYLYEPDAATVLEHVMTRYIESLVYQAVLENVASEHAARMVAMKAASDNANKMIGTLQLVYNKARQAAITQEISEIVSGAAAV.

The protein belongs to the ATPase gamma chain family. F-type ATPases have 2 components, CF(1) - the catalytic core - and CF(0) - the membrane proton channel. CF(1) has five subunits: alpha(3), beta(3), gamma(1), delta(1), epsilon(1). CF(0) has three main subunits: a, b and c.

It is found in the cell inner membrane. Its function is as follows. Produces ATP from ADP in the presence of a proton gradient across the membrane. The gamma chain is believed to be important in regulating ATPase activity and the flow of protons through the CF(0) complex. The protein is ATP synthase gamma chain of Xanthomonas campestris pv. campestris (strain B100).